The following is a 1037-amino-acid chain: Tyrosine-protein kinase-like otk (1037 aa).

The signal sequence occupies residues 1–23; the sequence is MDMDVMMISMCILASTFMAPGWA. 5 consecutive Ig-like C2-type domains span residues 24–109, 110–199, 251–365, 368–464, and 469–559; these read STSG…REAS, PPAK…RVMS, PEDL…APLN, PGLL…VSIN, and PKFS…VQLV. Topologically, residues 24-582 are extracellular; the sequence is STSGFLRVPQ…GGDGFLVTRA (559 aa). Intrachain disulfides connect Cys-47–Cys-96, Cys-138–Cys-188, Cys-276–Cys-354, Cys-399–Cys-448, and Cys-491–Cys-543. 6 N-linked (GlcNAc...) asparagine glycosylation sites follow: Asn-336, Asn-418, Asn-430, Asn-445, Asn-513, and Asn-525. A helical transmembrane segment spans residues 583–603; the sequence is VLITMTVALAYIVLVVGLMLW. The Cytoplasmic portion of the chain corresponds to 604-1037; the sequence is CRYRRQARKA…SKAMQSVAEK (434 aa). Disordered regions lie at residues 623 to 683 and 720 to 777; these read AGGD…KSVY and SAQS…KEEE. Positions 658–676 are enriched in polar residues; the sequence is KSNGDAQKSDDTACSQQSR. The residue at position 681 (Ser-681) is a Phosphoserine. The 339-residue stretch at 693-1031 folds into the Protein kinase; inactive domain; the sequence is LSELLQIGRG…QLGSALSKAM (339 aa). Over residues 723–734 the composition is skewed to basic and acidic residues; it reads SDKDADTEKQHS. The segment covering 739–749 has biased composition (gly residues); it reads GSGGSGSGSGS. Acidic residues predominate over residues 768-777; sequence DDIEEIKEEE.

The protein belongs to the protein kinase superfamily. Tyr protein kinase family. Insulin receptor subfamily. Interacts with plexA; component of a receptor complex that mediates the repulsive signaling in response to Semaphorin ligands.

The protein localises to the cell membrane. Functionally, acts as a calcium-dependent, homophilic cell adhesion molecule that regulates neural recognition during the development of the nervous system. Component of the repulsive Plexin signaling response to regulate motor axon guidance at the embryonic stage. Also component of a receptor complex that is required in the adult visual system to innervate the lamina layer; specific targeting of R1-R6 axons. In Drosophila pseudoobscura pseudoobscura (Fruit fly), this protein is Tyrosine-protein kinase-like otk.